We begin with the raw amino-acid sequence, 189 residues long: Peptidyl-tRNA hydrolase (189 aa).

A tRNA-binding site is contributed by tyrosine 14. The active-site Proton acceptor is the histidine 19. Residues phenylalanine 61, asparagine 63, and asparagine 109 each coordinate tRNA.

This sequence belongs to the PTH family. Monomer.

It localises to the cytoplasm. It carries out the reaction an N-acyl-L-alpha-aminoacyl-tRNA + H2O = an N-acyl-L-amino acid + a tRNA + H(+). In terms of biological role, hydrolyzes ribosome-free peptidyl-tRNAs (with 1 or more amino acids incorporated), which drop off the ribosome during protein synthesis, or as a result of ribosome stalling. Functionally, catalyzes the release of premature peptidyl moieties from peptidyl-tRNA molecules trapped in stalled 50S ribosomal subunits, and thus maintains levels of free tRNAs and 50S ribosomes. This Sulfurovum sp. (strain NBC37-1) protein is Peptidyl-tRNA hydrolase.